We begin with the raw amino-acid sequence, 314 residues long: Olfactory receptor 5B17 (314 aa).

The Extracellular portion of the chain corresponds to 1-23 (MENNTEVSEFILLGLTNAPELQV). N-linked (GlcNAc...) asparagine glycosylation is present at Asn3. A helical membrane pass occupies residues 24-44 (PLFIMFTLIYLITLTGNLGMI). Residues 45-52 (ILILLDSH) lie on the Cytoplasmic side of the membrane. Residues 53 to 73 (LHTPMYFFLSNLSLAGIGYSS) traverse the membrane as a helical segment. The Extracellular segment spans residues 74–97 (AVTPKVLTGLLIEDKAISYSACAA). Cys95 and Cys187 are oxidised to a cystine. A helical membrane pass occupies residues 98–118 (QMFFCAVFATVENYLLSSMAY). Topologically, residues 119-137 (DRYAAVCNPLHYTTTMTTR) are cytoplasmic. A helical transmembrane segment spans residues 138–158 (VCACLAIGCYVIGFLNASIQI). The Extracellular segment spans residues 159–194 (GDTFRLSFCMSNVIHHFFCDKPAVITLTCSEKHISE). A helical transmembrane segment spans residues 195-215 (LILVLISSFNVFFALLVTLIS). The Cytoplasmic portion of the chain corresponds to 216-235 (YLFILITILKRHTGKGYQKP). A helical transmembrane segment spans residues 236–256 (LSTCGSHLIAIFLFYITVIIM). Residues 257–269 (YIRPSSSHSMDTD) are Extracellular-facing. Residues 270–290 (KIASVFYTMIIPMLSPIVYTL) form a helical membrane-spanning segment. Topologically, residues 291–314 (RNKDVKNAFMKVVEKAKYSLDSVF) are cytoplasmic.

This sequence belongs to the G-protein coupled receptor 1 family.

It localises to the cell membrane. Odorant receptor. The polypeptide is Olfactory receptor 5B17 (OR5B17) (Homo sapiens (Human)).